The sequence spans 327 residues: tRNA dimethylallyltransferase (327 aa).

14–21 is a binding site for ATP; sequence GPTASGKT. 16–21 serves as a coordination point for substrate; sequence TASGKT. Interaction with substrate tRNA regions lie at residues 39-42 and 163-167; these read DSAL and QRIQR.

Belongs to the IPP transferase family. In terms of assembly, monomer. It depends on Mg(2+) as a cofactor.

The catalysed reaction is adenosine(37) in tRNA + dimethylallyl diphosphate = N(6)-dimethylallyladenosine(37) in tRNA + diphosphate. In terms of biological role, catalyzes the transfer of a dimethylallyl group onto the adenine at position 37 in tRNAs that read codons beginning with uridine, leading to the formation of N6-(dimethylallyl)adenosine (i(6)A). The protein is tRNA dimethylallyltransferase of Xanthomonas axonopodis pv. citri (strain 306).